A 164-amino-acid polypeptide reads, in one-letter code: MTTPDKQTFRDAMACVGAAVNIITTDGPAGRAGFTASAVCSVTDSPPTLLVCLNRGASVWPTFSENRTLCVNTLSAGQEPLSNLFGGKTPMEDRFAAARWQTGETGCPRLEEALASFDCRISQVVSVGTHDILFCDIVSIIRHPAPQGLVWFDRGYHALMRPAC.

Belongs to the non-flavoprotein flavin reductase family. RutF subfamily.

The enzyme catalyses FMNH2 + NAD(+) = FMN + NADH + 2 H(+). Functionally, catalyzes the reduction of FMN to FMNH2 which is used to reduce pyrimidine by RutA via the Rut pathway. The protein is FMN reductase (NADH) RutF of Enterobacter cloacae subsp. cloacae (strain ATCC 13047 / DSM 30054 / NBRC 13535 / NCTC 10005 / WDCM 00083 / NCDC 279-56).